The sequence spans 603 residues: DNA mismatch repair protein MutL (603 aa).

The protein belongs to the DNA mismatch repair MutL/HexB family.

This protein is involved in the repair of mismatches in DNA. It is required for dam-dependent methyl-directed DNA mismatch repair. May act as a 'molecular matchmaker', a protein that promotes the formation of a stable complex between two or more DNA-binding proteins in an ATP-dependent manner without itself being part of a final effector complex. This is DNA mismatch repair protein MutL from Sphingopyxis alaskensis (strain DSM 13593 / LMG 18877 / RB2256) (Sphingomonas alaskensis).